The chain runs to 635 residues: Protein NSP-INTERACTING KINASE 2 (635 aa).

The first 32 residues, 1–32 (MLQGRREAKKSYALFSSTFFFFFICFLSSSSA), serve as a signal peptide directing secretion. The Extracellular segment spans residues 33–248 (ELTDKGVNFE…DGGTKNRKIA (216 aa)). Asparagine 92 and asparagine 103 each carry an N-linked (GlcNAc...) asparagine glycan. LRR repeat units lie at residues 104–128 (LTNLQTVLLQNNYITGNIPHEIGKL), 129–153 (MKLKTLDLSTNNFTGQIPFTLSYSK), 155–176 (LQYLRVNNNSLTGTIPSSLANM), and 177–200 (TQLTFLDLSYNNLSGPVPRSLAKT). N-linked (GlcNAc...) asparagine glycosylation is found at asparagine 140, asparagine 162, asparagine 175, asparagine 188, asparagine 219, asparagine 231, and asparagine 235. A disordered region spans residues 214 to 242 (TEKDCNGTQPKPMSITLNSSQNKSSDGGT). Residues 219–241 (NGTQPKPMSITLNSSQNKSSDGG) are compositionally biased toward polar residues. The helical transmembrane segment at 249 to 269 (VVFGVSLTCVCLLIIGFGFLL) threads the bilayer. The Cytoplasmic segment spans residues 270–635 (WWRRRHNKQV…VQAMELSGPR (366 aa)). Threonine 309 is subject to Phosphothreonine. Positions 312–591 (FSSKNLVGKG…EGDGLVEKWE (280 aa)) constitute a Protein kinase domain. Residues 318 to 326 (VGKGGFGNV) and lysine 340 each bind ATP. Residues serine 393 and serine 396 each carry the phosphoserine modification. Position 408 is a phosphothreonine (threonine 408). The interval 422–502 (YLHEQCDPKI…DVFGFGILLL (81 aa)) is interaction with geminivirus NSP protein. Aspartate 435 acts as the Proton acceptor in catalysis. Phosphothreonine occurs at positions 468, 469, and 474. Tyrosine 482 carries the phosphotyrosine modification. Phosphoserine is present on serine 484. Phosphothreonine is present on threonine 485. At serine 489 the chain carries Phosphoserine. At threonine 564 the chain carries Phosphothreonine. Over residues 593-613 (SSQRAETNRSYSKPNEFSSSE) the composition is skewed to polar residues. The interval 593 to 621 (SSQRAETNRSYSKPNEFSSSERYSDLTDD) is disordered.

Belongs to the protein kinase superfamily. Ser/Thr protein kinase family. Oligomer. Interacts with geminivirus nuclear shuttle protein (NSP). In terms of processing, autophosphorylated. Expressed in flowers and roots.

The protein localises to the cell membrane. The catalysed reaction is L-seryl-[protein] + ATP = O-phospho-L-seryl-[protein] + ADP + H(+). The enzyme catalyses L-threonyl-[protein] + ATP = O-phospho-L-threonyl-[protein] + ADP + H(+). With respect to regulation, inhibited by the viral nuclear shuttle protein (NSP) that binds to the region required for oligomerization. Involved in defense response to geminivirus infection. Phosphorylates RPL10A in vitro. The polypeptide is Protein NSP-INTERACTING KINASE 2 (NIK2) (Arabidopsis thaliana (Mouse-ear cress)).